A 1676-amino-acid chain; its full sequence is Protein TIC 214 (1676 aa).

Transmembrane regions (helical) follow at residues 23-43 (AGPLIILGIYYGFLITLPIAP), 71-91 (GILIAAISGLTVSQLAFFLSI), 96-116 (LYMIWLKPHLLTLLVLPYMFF), 145-165 (AFLDSFLFQALNPVLLPSPVM), 179-199 (VSLFILGTAIGWLGGQIMFVL), and 226-246 (IFPPIVFGLCLAYMGRAPVSF).

This sequence belongs to the TIC214 family. As to quaternary structure, part of the Tic complex.

It is found in the plastid. The protein localises to the chloroplast inner membrane. Functionally, involved in protein precursor import into chloroplasts. May be part of an intermediate translocation complex acting as a protein-conducting channel at the inner envelope. The polypeptide is Protein TIC 214 (Zygnema circumcarinatum (Green alga)).